The chain runs to 436 residues: Arginine-hydroxylase NDUFAF5, mitochondrial (436 aa).

A mitochondrion-targeting transit peptide spans 1–25 (MLRTTFRKGFNLKCFSKDWNQTRQY). Positions 365–436 (VTLSQQQQQQ…DEINKNKDDK (72 aa)) are disordered. Positions 369–380 (QQQQQQGIEPQQ) are enriched in low complexity. Composition is skewed to basic and acidic residues over residues 391–411 (PKTD…HFEK) and 421–436 (QNKE…KDDK).

It belongs to the methyltransferase superfamily.

It is found in the mitochondrion. Involved in the assembly of mitochondrial NADH:ubiquinone oxidoreductase complex (complex I, MT-ND1) at early stages. Probably acts as an arginine hydroxylase. May also have methyltransferase activity. This is Arginine-hydroxylase NDUFAF5, mitochondrial from Dictyostelium discoideum (Social amoeba).